A 957-amino-acid polypeptide reads, in one-letter code: ERC protein 2 (957 aa).

Residues 1 to 13 (MYGSARTISNLEG) show a composition bias toward polar residues. Residues 1 to 44 (MYGSARTISNLEGSPSRSPRLPRSPRLGHRRTSSGGGGGTGKTL) are disordered. Residues 14-25 (SPSRSPRLPRSP) show a composition bias toward low complexity. Residues Ser65 and Ser666 each carry the phosphoserine modification. The stretch at 140–917 (RQVRDSTMLD…RMKLMADNYD (778 aa)) forms a coiled coil. Basic residues predominate over residues 922–943 (HYHHHHHHHHHRSPGRSQHSNH). Residues 922–957 (HYHHHHHHHHHRSPGRSQHSNHRPSPDQDDEEGIWA) form a disordered region. The span at 948 to 957 (DQDDEEGIWA) shows a compositional bias: acidic residues.

Interacts with BSN, ERC1, PPFIA1, PPFIA2, PPFIA3 and PPFIA4. Interacts through its C-terminus with the PDZ domain of RIMS1. Part of a complex consisting of ERC2, RIMS1 and UNC13A. As to expression, expressed throughout the central nervous system, including hippocampus, cortex, cerebellum and olfactory bulb.

The protein resides in the cytoplasm. It localises to the synapse. The protein localises to the presynaptic active zone. It is found in the cytoskeleton. Its function is as follows. Thought to be involved in the organization of the cytomatrix at the nerve terminals active zone (CAZ) which regulates neurotransmitter release. Seems to act together with BSN. May recruit liprin-alpha proteins to the CAZ. This chain is ERC protein 2 (Erc2), found in Mus musculus (Mouse).